A 161-amino-acid polypeptide reads, in one-letter code: Nucleotide-binding protein HCH_04620 (161 aa).

This sequence belongs to the YajQ family.

Its function is as follows. Nucleotide-binding protein. This is Nucleotide-binding protein HCH_04620 from Hahella chejuensis (strain KCTC 2396).